Consider the following 287-residue polypeptide: uncharacterized protein (287 aa).

Residues 133–239 (CEVGKTKKMT…KNIIGISIVQ (107 aa)) enclose the THUMP domain. Positions 257 to 287 (ENTKSIPNDSKLDNFDRDKNQIINDKAEHAE) are disordered. A compositionally biased stretch (basic and acidic residues) spans 266–287 (SKLDNFDRDKNQIINDKAEHAE).

This is an uncharacterized protein from Schizosaccharomyces pombe (strain 972 / ATCC 24843) (Fission yeast).